Consider the following 1289-residue polypeptide: uncharacterized protein (1289 aa).

The N-terminal stretch at 1 to 23 is a signal peptide; it reads MRKYTVIASILLSFLSVLSGGHH. The region spanning 141–277 is the LTD domain; that stretch reads EGYQADLAHI…VVISTNTGKD (137 aa).

This is an uncharacterized protein from Bacillus subtilis (strain 168).